The following is a 238-amino-acid chain: HTH-type transcriptional regulator TreR (238 aa).

Positions 1 to 71 constitute an HTH gntR-type domain; that stretch reads MKVNKFITIY…RGKGSVVLNR (71 aa). The H-T-H motif DNA-binding region spans 31 to 50; the sequence is EHELTAQYGTSRETVRKALH.

Dimer of dimers.

Repressor for the trePA operon. It is able to bind trehalose-6-phosphate. The polypeptide is HTH-type transcriptional regulator TreR (treR) (Bacillus subtilis (strain 168)).